The following is an 86-amino-acid chain: MVHICRLFVVMGMLLCLSAQFASSQHWSHGWYPGGKREIDVYDSSEVSGEIKLCEAGKCSYLRPQGRNILKTILLDAIIRDSQKRK.

The first 24 residues, 1–24 (MVHICRLFVVMGMLLCLSAQFASS), serve as a signal peptide directing secretion. At glutamine 25 the chain carries Pyrrolidone carboxylic acid. The residue at position 34 (glycine 34) is a Glycine amide.

Belongs to the GnRH family. In terms of tissue distribution, olfactory bulbs, hypothalamus and telencephalon, midbrain and posterior brain areas.

Its subcellular location is the secreted. In terms of biological role, stimulates the secretion of gonadotropins. The chain is Progonadoliberin IIA (gnrh2a) from Carassius auratus (Goldfish).